The following is a 248-amino-acid chain: Glutathione S-transferase omega-2 (248 aa).

The GST N-terminal domain occupies 22-101 (GVIRIYSMRF…YLDDVYPGRK (80 aa)). Cysteine 32 serves as the catalytic Nucleophile. Glutathione-binding positions include lysine 59, isoleucine 72, and 85-86 (ES). The region spanning 106–231 (DPYERARQKM…VFLGFLNLYF (126 aa)) is the GST C-terminal domain.

It belongs to the GST superfamily. Omega family.

It catalyses the reaction RX + glutathione = an S-substituted glutathione + a halide anion + H(+). It carries out the reaction L-dehydroascorbate + 2 glutathione = glutathione disulfide + L-ascorbate. The enzyme catalyses methylarsonate + 2 glutathione + H(+) = methylarsonous acid + glutathione disulfide + H2O. In terms of biological role, exhibits glutathione-dependent thiol transferase activity. Has high dehydroascorbate reductase activity and may contribute to the recycling of ascorbic acid. Participates in the biotransformation of inorganic arsenic and reduces monomethylarsonic acid (MMA). In Mus musculus (Mouse), this protein is Glutathione S-transferase omega-2 (Gsto2).